Here is a 632-residue protein sequence, read N- to C-terminus: MNRLGRMSLPLRSPACLICQTRTTTLIPSSWQTARSMATARLRRKVSRMALSPDVAKPSLNKDRKKRERPGPFAAMNQTEARIRDTPRTRSQAALKRSGDSKEEAQKKESPLYKALKMQTTLAPVPYGKRTAVKAKIADITSFDQFPLLPVVRNSIVSQALPGLMEVTPTPIQRLAIPKLLEESKPDKKPVKTDDDEPHYDQFLLAAETGSGKTLAYLLPVVDAVKRAEAVDKELEKKEEEEKAREREEKMKNKAFDIEPELPPLSNAGRPRAIILVPTSELVAQVGVKVKALSHTVKYRSGMISSNLTPRRIKNTLFHPDGIDILVATPHLLASIAKTEPYLLSRVSHLVLDEADSLLDRSFAPTTTEIISKVAPSLQKLILCSATIPRSLDNLLRKRYPDIKRLTTPNLHAIPRRVQLGVVDIEKDPYRGNRSLACADVIWSIGKAGDSEVSGPYSSFLEPKTKKILVFVNEREEADEVAQFLQSKGIDAHSLSRDSSARKQEEILAEFTEAPPPPSPDEIMLAQKQRRHEDPIPFEMPKRTNSGGSTRRLPNTKVLVTTDLTSRGIDTLAVKTVILYHVPHTTIDFIHRLGRLGRMGKRGRGVVLVGKKDRKDVVKEVREGMFRGQALI.

Residues 1–37 constitute a mitochondrion transit peptide; it reads MNRLGRMSLPLRSPACLICQTRTTTLIPSSWQTARSM. The interval 49-111 is disordered; that stretch reads MALSPDVAKP…KEEAQKKESP (63 aa). A compositionally biased stretch (basic and acidic residues) spans 97-111; sequence RSGDSKEEAQKKESP. A Q motif motif is present at residues 141–174; sequence TSFDQFPLLPVVRNSIVSQALPGLMEVTPTPIQR. One can recognise a Helicase ATP-binding domain in the interval 194–406; it reads DDDEPHYDQF…RKRYPDIKRL (213 aa). 207-214 serves as a coordination point for ATP; it reads AETGSGKT. The short motif at 353–356 is the DEAD box element; that stretch reads DEAD. A Helicase C-terminal domain is found at 460–632; sequence FLEPKTKKIL…EGMFRGQALI (173 aa).

The protein belongs to the DEAD box helicase family. MRH4 subfamily.

The protein resides in the mitochondrion. The enzyme catalyses ATP + H2O = ADP + phosphate + H(+). In terms of biological role, ATP-binding RNA helicase involved in mitochondrial RNA metabolism. Required for maintenance of mitochondrial DNA. This Aspergillus clavatus (strain ATCC 1007 / CBS 513.65 / DSM 816 / NCTC 3887 / NRRL 1 / QM 1276 / 107) protein is ATP-dependent RNA helicase mrh4, mitochondrial (mrh4).